A 90-amino-acid polypeptide reads, in one-letter code: Putative membrane protein insertion efficiency factor (90 aa).

It belongs to the UPF0161 family.

Its subcellular location is the cell inner membrane. Functionally, could be involved in insertion of integral membrane proteins into the membrane. The protein is Putative membrane protein insertion efficiency factor of Bordetella bronchiseptica (strain ATCC BAA-588 / NCTC 13252 / RB50) (Alcaligenes bronchisepticus).